A 119-amino-acid chain; its full sequence is MKKMNVVAFVTLIISFLLLSQVLAELSSSSNNETSSVSQTNDENQTAAFKRTYHHRPRINCGHACARRCSKTSRKKVCHRACGSCCAKCQCVPPGTSGNTASCPCYASIRTHGNKLKCP.

A signal peptide spans 1–24; that stretch reads MKKMNVVAFVTLIISFLLLSQVLA.

The protein belongs to the GASA family. Six disulfide bonds may be present.

The protein resides in the secreted. Functionally, gibberellin-regulated protein that may function in hormonal controlled steps of development such as seed germination, flowering and seed maturation. The sequence is that of Gibberellin-regulated protein 9 (GASA9) from Arabidopsis thaliana (Mouse-ear cress).